A 1217-amino-acid polypeptide reads, in one-letter code: Rho family-interacting cell polarization regulator 1 (1217 aa).

Position 22 is a phosphoserine (Ser-22). A coiled-coil region spans residues 83–112 (RGLTAYLEVHQQEQEKLQRQIKESKRNSRL). 2 positions are modified to phosphoserine: Ser-345 and Ser-347. A Phosphothreonine modification is found at Thr-351. Residues 371-413 (NGTAWSLSSESSDDSSSPQLSGTARYSSTPKPLVQQPEPLPVQ) are disordered. 2 stretches are compositionally biased toward low complexity: residues 376–391 (SLSSESSDDSSSPQLS) and 400–413 (PKPLVQQPEPLPVQ). Phosphoserine is present on residues Ser-452 and Ser-455. The disordered stretch occupies residues 565–762 (TSTTVGSTHK…SPSSIVPEPQ (198 aa)). Over residues 579–594 (PLTSTGSIPSVTDSIQ) the composition is skewed to polar residues. Low complexity predominate over residues 595 to 649 (TTTSPTHTTPSPTHTTVSPTHSTPSPTHTTVSPSNAALSPSNATPSLSHSTTSPT). Residues 650 to 661 (QKATMSTHTTSA) show a composition bias toward polar residues. The segment covering 664–695 (PVQTTTSPISTTVSPSPSVDTAIISSSSAVPS) has biased composition (low complexity). Residues 720–729 (ACTSSPSLAS) show a composition bias toward polar residues. Ser-742 carries the post-translational modification Phosphoserine. Residues 786–828 (RRLEEALRTLMAALDDYRGQFPELQGLEQEVTRLESLLMQRQG) adopt a coiled-coil conformation. Residues 850 to 874 (FLNDDEDEDNDSPGDRPTSSPEVVA) are disordered. Residues 852-861 (NDDEDEDNDS) are compositionally biased toward acidic residues. Phosphoserine occurs at positions 868 and 869.

The protein belongs to the RIPOR family. In terms of assembly, interacts (via N-terminus) with RHOA (GTP-bound form); this interaction links active RHOA to STK24 and STK26 kinases. Interacts with RHOB. Interacts with RHOC. Interacts (via C-terminus) with PDCD10; this interaction occurs in a Rho-independent manner. Interacts (via C-terminus) with STK24; this interaction occurs in a PDCD10-dependent and Rho-independent manner. Interacts (via C-terminus) with STK26; this interaction occurs in a PDCD10-dependent and Rho-independent manner. Interacts (via N-terminus) with 14-3-3 proteins; these interactions occur in a Rho-dependent manner.

The protein resides in the cytoplasm. Its subcellular location is the golgi apparatus. Downstream effector protein for Rho-type small GTPases that plays a role in cell polarity and directional migration. Acts as an adapter protein, linking active Rho proteins to STK24 and STK26 kinases, and hence positively regulates Golgi reorientation in polarized cell migration upon Rho activation. Involved in the subcellular relocation of STK26 from the Golgi to cytoplasm punctae in a Rho- and PDCD10-dependent manner upon serum stimulation. This chain is Rho family-interacting cell polarization regulator 1, found in Rattus norvegicus (Rat).